A 249-amino-acid polypeptide reads, in one-letter code: Probable phosphatase VV2_1469 (249 aa).

Residues histidine 8, histidine 10, histidine 16, histidine 41, glutamate 74, histidine 102, histidine 132, aspartate 194, and histidine 196 each coordinate Zn(2+).

This sequence belongs to the PHP family. The cofactor is Zn(2+).

The chain is Probable phosphatase VV2_1469 from Vibrio vulnificus (strain CMCP6).